We begin with the raw amino-acid sequence, 177 residues long: MGTNTSSLRPEEVEEMQKGTNFTQKEIKKLYKRFKKLDKDGNGTISKDEFLMIPELAVNPLVKRVISIFDENGDGSVNFKEFIAALSVFNAQGDKQRKLEFAFKVYDIDGDGYISNGELFTVLKMMVGNNLSDVQLQQIVDKTILEADEDGDGKISFEEFAKTLSHQDLENKMTIRL.

4 EF-hand domains span residues 25 to 60 (KEIK…AVNP), 62 to 92 (VKRV…FNAQ), 94 to 129 (DKQR…MVGN), and 135 to 170 (QLQQ…QDLE). Ca(2+) contacts are provided by Asp38, Asp40, Asn42, Thr44, Glu49, Asp70, Asn72, Asp74, Ser76, Glu81, Asp107, Asp109, Asp111, Tyr113, Glu118, Asp148, Asp150, Asp152, Lys154, and Glu159.

This sequence belongs to the calcineurin regulatory subunit family. Composed of a catalytic subunit (A) and a regulatory subunit (B).

In terms of biological role, regulatory subunit of calcineurin, a calcium-dependent, calmodulin stimulated protein phosphatase. Confers calcium sensitivity. The sequence is that of Calcineurin subunit B (CNB1) from Naegleria gruberi (Amoeba).